A 283-amino-acid polypeptide reads, in one-letter code: Elongation factor Ts (283 aa).

An involved in Mg(2+) ion dislocation from EF-Tu region spans residues 80-83; sequence TDFV.

Belongs to the EF-Ts family.

The protein resides in the cytoplasm. Associates with the EF-Tu.GDP complex and induces the exchange of GDP to GTP. It remains bound to the aminoacyl-tRNA.EF-Tu.GTP complex up to the GTP hydrolysis stage on the ribosome. This Actinobacillus pleuropneumoniae serotype 5b (strain L20) protein is Elongation factor Ts.